The chain runs to 334 residues: Thiamine thiazole synthase (334 aa).

Residues Cys-86, 107–108, Gly-115, and Val-183 each bind substrate; that span reads EA. Residue Cys-221 is modified to 2,3-didehydroalanine (Cys). Substrate contacts are provided by residues Asp-223, His-238, Met-290, and 300–302; that span reads RMG.

This sequence belongs to the THI4 family. In terms of assembly, homooctamer. Fe cation is required as a cofactor. During the catalytic reaction, a sulfide is transferred from Cys-221 to a reaction intermediate, generating a dehydroalanine residue.

It localises to the cytoplasm. It is found in the nucleus. The enzyme catalyses [ADP-thiazole synthase]-L-cysteine + glycine + NAD(+) = [ADP-thiazole synthase]-dehydroalanine + ADP-5-ethyl-4-methylthiazole-2-carboxylate + nicotinamide + 3 H2O + 2 H(+). Its function is as follows. Involved in biosynthesis of the thiamine precursor thiazole. Catalyzes the conversion of NAD and glycine to adenosine diphosphate 5-(2-hydroxyethyl)-4-methylthiazole-2-carboxylic acid (ADT), an adenylated thiazole intermediate. The reaction includes an iron-dependent sulfide transfer from a conserved cysteine residue of the protein to a thiazole intermediate. The enzyme can only undergo a single turnover, which suggests it is a suicide enzyme. May have additional roles in adaptation to various stress conditions and in DNA damage tolerance. This is Thiamine thiazole synthase from Ajellomyces capsulatus (strain G186AR / H82 / ATCC MYA-2454 / RMSCC 2432) (Darling's disease fungus).